Consider the following 388-residue polypeptide: Na(+)/H(+) antiporter NhaA (388 aa).

At methionine 1 to aspartate 11 the chain is on the cytoplasmic side. Residues alanine 12 to serine 31 traverse the membrane as a helical segment. Over glycine 32–asparagine 58 the chain is Periplasmic. Residues methionine 59–lysine 80 form a helical membrane-spanning segment. Residues arginine 81 to phenylalanine 96 lie on the Cytoplasmic side of the membrane. The chain crosses the membrane as a helical span at residues proline 97 to asparagine 116. Over tyrosine 117–threonine 122 the chain is Periplasmic. A helical membrane pass occupies residues arginine 123–alanine 130. Residues alanine 131–isoleucine 154 are Cytoplasmic-facing. Residues phenylalanine 155 to threonine 176 traverse the membrane as a helical segment. Topologically, residues asparagine 177–serine 180 are periplasmic. The helical transmembrane segment at methionine 181–cysteine 200 threads the bilayer. Residues glycine 201 to arginine 204 are Cytoplasmic-facing. Residues threonine 205–serine 222 traverse the membrane as a helical segment. Residue glycine 223 is a topological domain, periplasmic. The chain crosses the membrane as a helical span at residues valine 224–phenylalanine 236. At isoleucine 237–histidine 253 the chain is on the cytoplasmic side. A helical membrane pass occupies residues valine 254–alanine 272. The Periplasmic portion of the chain corresponds to glycine 273–serine 286. Residues isoleucine 287–leucine 310 form a helical membrane-spanning segment. The Cytoplasmic segment spans residues alanine 311–phenylalanine 339. The helical transmembrane segment at threonine 340–phenylalanine 350 threads the bilayer. Topologically, residues glycine 351–leucine 357 are periplasmic. Residues isoleucine 358–leucine 380 form a helical membrane-spanning segment. Over arginine 381–valine 388 the chain is Cytoplasmic.

This sequence belongs to the NhaA Na(+)/H(+) (TC 2.A.33) antiporter family.

It is found in the cell inner membrane. It catalyses the reaction Na(+)(in) + 2 H(+)(out) = Na(+)(out) + 2 H(+)(in). Functionally, na(+)/H(+) antiporter that extrudes sodium in exchange for external protons. This Escherichia coli O9:H4 (strain HS) protein is Na(+)/H(+) antiporter NhaA.